A 1002-amino-acid chain; its full sequence is Isoleucine--tRNA ligase, mitochondrial (1002 aa).

The 'HIGH' region signature appears at 94 to 104 (PYANGELHLGH). The 'KMSKS' region signature appears at 668 to 672 (KMSKS). Lysine 671 provides a ligand contact to ATP.

This sequence belongs to the class-I aminoacyl-tRNA synthetase family.

Its subcellular location is the mitochondrion matrix. It catalyses the reaction tRNA(Ile) + L-isoleucine + ATP = L-isoleucyl-tRNA(Ile) + AMP + diphosphate. In Saccharomyces cerevisiae (strain ATCC 204508 / S288c) (Baker's yeast), this protein is Isoleucine--tRNA ligase, mitochondrial (ISM1).